Consider the following 189-residue polypeptide: Thymidine kinase (189 aa).

ATP-binding positions include 9–16 and 85–88; these read GTMNSGKS and DEAQ. Catalysis depends on Glu-86, which acts as the Proton acceptor. Positions 143, 146, 180, and 183 each coordinate Zn(2+).

The protein belongs to the thymidine kinase family. In terms of assembly, homotetramer.

It is found in the cytoplasm. The catalysed reaction is thymidine + ATP = dTMP + ADP + H(+). This Lactococcus lactis subsp. lactis (strain IL1403) (Streptococcus lactis) protein is Thymidine kinase.